Consider the following 503-residue polypeptide: V-type proton ATPase subunit B (503 aa).

Residue R378 participates in ATP binding. Phosphoserine occurs at positions 491, 492, 502, and 503.

This sequence belongs to the ATPase alpha/beta chains family. In terms of assembly, V-ATPase is a heteromultimeric enzyme composed of a peripheral catalytic V1 complex (components A to H) attached to an integral membrane V0 proton pore complex (components: a, c, c', c'', d, e, f and VOA1). Interacts with rav1.

It localises to the vacuole membrane. Functionally, non-catalytic subunit of the V1 complex of vacuolar(H+)-ATPase (V-ATPase), a multisubunit enzyme composed of a peripheral complex (V1) that hydrolyzes ATP and a membrane integral complex (V0) that translocates protons. V-ATPase is responsible for acidifying and maintaining the pH of intracellular compartments. The polypeptide is V-type proton ATPase subunit B (Schizosaccharomyces pombe (strain 972 / ATCC 24843) (Fission yeast)).